A 344-amino-acid chain; its full sequence is Mitogen-activated protein kinase mpkC (344 aa).

The 280-residue stretch at 19–298 folds into the Protein kinase domain; the sequence is YANVQPVGLG…AETALQHPYL (280 aa). Residues 25-33 and K48 each bind ATP; that span reads VGLGAFGLV. Residue D140 is the Proton acceptor of the active site. T170 is subject to Phosphothreonine. Residues 170-172 carry the TXY motif; it reads TGY. Y172 is modified (phosphotyrosine).

The protein belongs to the protein kinase superfamily. Ser/Thr protein kinase family. MAP kinase subfamily. HOG1 sub-subfamily. It depends on Mg(2+) as a cofactor. Post-translationally, dually phosphorylated on Thr-170 and Tyr-172, which activates the enzyme.

The enzyme catalyses L-seryl-[protein] + ATP = O-phospho-L-seryl-[protein] + ADP + H(+). The catalysed reaction is L-threonyl-[protein] + ATP = O-phospho-L-threonyl-[protein] + ADP + H(+). Activated by tyrosine and threonine phosphorylation. Functionally, mitogen-activated protein kinase required for growth on media where sorbitol or mannitol is the sole carbon source. The sequence is that of Mitogen-activated protein kinase mpkC (mpkC) from Aspergillus oryzae (strain ATCC 42149 / RIB 40) (Yellow koji mold).